A 364-amino-acid polypeptide reads, in one-letter code: Succinyl-diaminopimelate desuccinylase (364 aa).

H66 is a Zn(2+) binding site. D68 is an active-site residue. Residue D97 participates in Zn(2+) binding. E127 acts as the Proton acceptor in catalysis. Zn(2+) contacts are provided by E128, E156, and H341.

This sequence belongs to the peptidase M20A family. DapE subfamily. Homodimer. Zn(2+) serves as cofactor. The cofactor is Co(2+).

It carries out the reaction N-succinyl-(2S,6S)-2,6-diaminopimelate + H2O = (2S,6S)-2,6-diaminopimelate + succinate. It functions in the pathway amino-acid biosynthesis; L-lysine biosynthesis via DAP pathway; LL-2,6-diaminopimelate from (S)-tetrahydrodipicolinate (succinylase route): step 3/3. Its function is as follows. Catalyzes the hydrolysis of N-succinyl-L,L-diaminopimelic acid (SDAP), forming succinate and LL-2,6-diaminopimelate (DAP), an intermediate involved in the bacterial biosynthesis of lysine and meso-diaminopimelic acid, an essential component of bacterial cell walls. The sequence is that of Succinyl-diaminopimelate desuccinylase from Wolinella succinogenes (strain ATCC 29543 / DSM 1740 / CCUG 13145 / JCM 31913 / LMG 7466 / NCTC 11488 / FDC 602W) (Vibrio succinogenes).